A 197-amino-acid chain; its full sequence is Large ribosomal subunit protein eL15 (197 aa).

Composition is skewed to basic residues over residues 70-90 (PKGG…RMGK), 163-179 (RGKT…RKRG), and 187-197 (PSLRAHRRRGK). 2 disordered regions span residues 70-99 (PKGG…GKSK) and 163-197 (RGKT…RRGK).

The protein belongs to the eukaryotic ribosomal protein eL15 family.

The polypeptide is Large ribosomal subunit protein eL15 (Methanopyrus kandleri (strain AV19 / DSM 6324 / JCM 9639 / NBRC 100938)).